The sequence spans 1456 residues: Macrophage mannose receptor 1 (1456 aa).

The N-terminal stretch at 1–19 (MRLLLLLAFISVIPVSVQL) is a signal peptide. Residues 20–1388 (LDARQFLIYN…DPQPKGSSKA (1369 aa)) lie on the Extracellular side of the membrane. The region spanning 22–142 (ARQFLIYNED…SGLWSRWKVY (121 aa)) is the Ricin B-type lectin domain. Disulfide bonds link Cys-35–Cys-49, Cys-74–Cys-91, Cys-102–Cys-149, Cys-168–Cys-194, Cys-182–Cys-209, Cys-247–Cys-340, and Cys-316–Cys-332. A glycan (N-linked (GlcNAc...) asparagine) is linked at Asn-104. Residues 163–211 (ANGAVCAFPFKFENKWYADCTSAGRSDGWLWCGTTTDYDKDKLFGFCPL) form the Fibronectin type-II domain. One can recognise a C-type lectin 1 domain in the interval 225–341 (LTGILYQINS…CVQKLGYICK (117 aa)). A glycan (N-linked (GlcNAc...) asparagine) is linked at Asn-344. C-type lectin domains lie at 369–487 (YAGH…YICK), 511–626 (HGFY…FVCK), 655–778 (KTSM…WICQ), and 807–923 (YKDY…FICQ). Cystine bridges form between Cys-391-Cys-486 and Cys-463-Cys-478. A glycan (N-linked (GlcNAc...) asparagine) is linked at Asn-529. Cystine bridges form between Cys-532-Cys-625, Cys-600-Cys-617, Cys-680-Cys-777, Cys-753-Cys-769, Cys-828-Cys-922, and Cys-899-Cys-914. Asn-926 and Asn-930 each carry an N-linked (GlcNAc...) asparagine glycan. C-type lectin domains lie at 951-1079 (YKNK…YICQ), 1101-1212 (YGKS…FLCK), and 1240-1355 (FYGH…FICK). 6 disulfide bridges follow: Cys-976–Cys-1078, Cys-1051–Cys-1070, Cys-1122–Cys-1211, Cys-1189–Cys-1203, Cys-1262–Cys-1354, and Cys-1331–Cys-1346. A glycan (N-linked (GlcNAc...) asparagine) is linked at Asn-1159. Asn-1204 carries an N-linked (GlcNAc...) asparagine glycan. Residues 1389 to 1409 (AGVVTVVLLIVIGAGVAAYFF) form a helical membrane-spanning segment. Topologically, residues 1410 to 1456 (YKKRHALHIPQEATFENTLYFNSNLSPGTSDTKDLMGNIEQNEHAII) are cytoplasmic.

As to expression, detected in macrophages.

The protein resides in the endosome membrane. The protein localises to the cell membrane. In terms of biological role, mediates the endocytosis of glycoproteins by macrophages. Binds both sulfated and non-sulfated polysaccharide chains. Acts as phagocytic receptor for bacteria, fungi and other pathogens. The polypeptide is Macrophage mannose receptor 1 (Mrc1) (Mus musculus (Mouse)).